We begin with the raw amino-acid sequence, 2151 residues long: RNA-directed RNA polymerase L (2151 aa).

Mn(2+) contacts are provided by His-36, Glu-54, Asp-97, Glu-110, and Val-111. The For endonuclease activity role is filled by Lys-124. The RdRp catalytic domain maps to 956-1142 (NGKFIRMKRK…SVNTEMWKSM (187 aa)). Position 1099 (Asp-1099) interacts with Mg(2+).

This sequence belongs to the Bunyavirales RNA polymerase family. As to quaternary structure, interacts with the viral nucleoprotein. The cofactor is Mn(2+). It depends on Mg(2+) as a cofactor.

The protein resides in the host cytoplasm. The protein localises to the host perinuclear region. The catalysed reaction is RNA(n) + a ribonucleoside 5'-triphosphate = RNA(n+1) + diphosphate. Its function is as follows. RNA-dependent RNA polymerase, which is responsible for the replication and transcription of the viral RNA genome using antigenomic RNA as an intermediate. During transcription, synthesizes subgenomic RNAs and assures their capping by a cap-snatching mechanism, which involves the endonuclease activity cleaving the host capped pre-mRNAs. These short capped RNAs are then used as primers for viral transcription. Cleaves ssRNA substrates but not DNA. Seems to downregulate the expression of its own and heterologous mRNAs through its endonuclease activity. This chain is RNA-directed RNA polymerase L, found in Apodemus agrarius (Eurasian field mouse).